The following is a 1905-amino-acid chain: Low-density lipoprotein receptor-related protein 4 (1905 aa).

The N-terminal stretch at 1–20 is a signal peptide; it reads MRRWWGALLLGALLCAHGIA. Residues 21 to 1725 are Extracellular-facing; that stretch reads SSLECACGRS…AAPGEGLHVS (1705 aa). 8 consecutive LDL-receptor class A domains span residues 26–67, 70–106, 109–144, 147–183, 190–226, 230–266, 269–305, and 311–350; these read ACGR…DGCT, TCSPLDFHCDNGKCIRRSWVCDGDNDCEDDSDEQDCP, ECEEDEFPCQNGYCIRSLWHCDGDNDCGDNSDEQCD, KCSDKEFRCSDGSCIAEHWYCDGDTDCKDGSDEESCP, PCNLEEFQCAYGRCILDIYHCDGDDDCGDWSDESDCS, PCRSGEFMCDSGLCINSGWRCDGDADCDDQSDERNCT, MCTAEQFRCRSGRCVRLSWRCDGEDDCADNSDEENCE, and QCASDQFLCWNGRCIGQRKLCNGINDCGDSSDESPQQNCR. 30 cysteine pairs are disulfide-bonded: Cys-27–Cys-44, Cys-34–Cys-57, Cys-51–Cys-66, Cys-71–Cys-83, Cys-78–Cys-96, Cys-90–Cys-105, Cys-110–Cys-122, Cys-117–Cys-135, Cys-129–Cys-143, Cys-148–Cys-160, Cys-155–Cys-173, Cys-167–Cys-182, Cys-191–Cys-203, Cys-198–Cys-216, Cys-210–Cys-225, Cys-231–Cys-243, Cys-238–Cys-256, Cys-250–Cys-265, Cys-270–Cys-282, Cys-277–Cys-295, Cys-289–Cys-304, Cys-312–Cys-324, Cys-319–Cys-337, Cys-331–Cys-349, Cys-358–Cys-369, Cys-365–Cys-378, Cys-380–Cys-393, Cys-399–Cys-409, Cys-405–Cys-418, and Cys-420–Cys-433. N-linked (GlcNAc...) asparagine glycosylation is present at Asn-264. The EGF-like 1; atypical domain occupies 354-394; sequence GEENCNVNNGGCAQKCQMVRGAVQCTCHTGYRLTEDGRTCQ. The EGF-like 2; calcium-binding domain maps to 395-434; that stretch reads DVNECAEEGYCSQGCTNTEGAFQCWCEAGYELRPDRRSCK. LDL-receptor class B repeat units follow at residues 480 to 522, 523 to 565, 566 to 609, 610 to 652, and 653 to 693; these read ELVF…DWVH, DKLY…HPME, GTIY…DYAG, RRMY…FEDS, and LYWT…LHPQ. Asn-498 carries N-linked (GlcNAc...) asparagine glycosylation. Residues 698–737 enclose the EGF-like 3 domain; that stretch reads GKNRCGDNNGGCTHLCLPSGQNYTCACPTGFRKINSHACA. Disulfide bonds link Cys-702/Cys-713, Cys-709/Cys-722, and Cys-724/Cys-736. Residue Asn-719 is glycosylated (N-linked (GlcNAc...) asparagine). LDL-receptor class B repeat units follow at residues 785–827, 828–870, 871–914, 915–956, and 957–998; these read DHVY…DWVT, NKLY…EPMG, GYMY…DYGS, QRLY…LYGQ, and RIYW…FHRQ. N-linked (GlcNAc...) asparagine glycosylation is present at Asn-901. The N-linked (GlcNAc...) asparagine glycan is linked to Asn-1077. LDL-receptor class B repeat units lie at residues 1093–1135, 1136–1178, 1179–1222, 1223–1263, 1264–1306, 1397–1439, 1440–1482, 1483–1526, 1527–1568, and 1569–1610; these read GKVY…DAIG, RKVY…YHEM, GFMY…DKTS, SQLL…LLDS, YIYW…DRAQ, GKVY…DWVA, RNLY…FPRK, GYLF…DYDT, RRIY…QDRW, and IYWT…SPQR. N-linked (GlcNAc...) asparagine glycans are attached at residues Asn-1415 and Asn-1467. The interval 1661–1696 is disordered; the sequence is ATSMNEKSPVLPNTLPTTLHSSTTKTRTSLEGAGGR. Residues 1674–1690 are compositionally biased toward low complexity; it reads TLPTTLHSSTTKTRTSL. Residues 1726–1746 traverse the membrane as a helical segment; that stretch reads YAIGGLLSILLILLVIAALML. Topologically, residues 1747–1905 are cytoplasmic; sequence YRHRKSKFTD…ERKLSSESQV (159 aa). A disordered region spans residues 1852–1905; the sequence is ASSGSLDDTETEQLLQEEQSECSSVHTAATPERRGSLPDTGWKHERKLSSESQV. Positions 1882 to 1905 are enriched in basic and acidic residues; sequence PERRGSLPDTGWKHERKLSSESQV.

The protein belongs to the LDLR family. Homooligomer. Interacts with MUSK; the heterodimer forms an AGRIN receptor complex that binds AGRIN resulting in activation of MUSK. Interacts (via the extracellular domain) with SOST; the interaction facilitates the inhibition of Wnt signaling. Interacts with MESD; the interaction promotes glycosylation of LRP4 and its cell-surface expression. Post-translationally, N-glycosylation is required for cell surface location.

The protein resides in the cell membrane. In terms of biological role, mediates SOST-dependent inhibition of bone formation. Functions as a specific facilitator of SOST-mediated inhibition of Wnt signaling. Plays a key role in the formation and the maintenance of the neuromuscular junction (NMJ), the synapse between motor neuron and skeletal muscle. Directly binds AGRIN and recruits it to the MUSK signaling complex. Mediates the AGRIN-induced phosphorylation of MUSK, the kinase of the complex. The activation of MUSK in myotubes induces the formation of NMJ by regulating different processes including the transcription of specific genes and the clustering of AChR in the postsynaptic membrane. Alternatively, may be involved in the negative regulation of the canonical Wnt signaling pathway, being able to antagonize the LRP6-mediated activation of this pathway. More generally, has been proposed to function as a cell surface endocytic receptor binding and internalizing extracellular ligands for degradation by lysosomes. Plays an essential role in the process of digit differentiation. The protein is Low-density lipoprotein receptor-related protein 4 (Lrp4) of Mus musculus (Mouse).